The following is a 410-amino-acid chain: Translation initiation factor 2 subunit gamma (410 aa).

The tr-type G domain occupies 6 to 203 (QSEVNIGMVG…AIQEFIPTPK (198 aa)). Residues 15 to 22 (GHVDHGKT) form a G1 region. Positions 18, 22, 43, and 45 each coordinate Mg(2+). 18 to 23 (DHGKTS) contributes to the GTP binding site. Positions 43-47 (GISIR) are G2. Positions 58, 61, 73, and 76 each coordinate Zn(2+). Residues 90–93 (DAPG) form a G3 region. Residues 146 to 149 (NKID) and 181 to 183 (SAH) each bind GTP. Residues 146-149 (NKID) are G4. A G5 region spans residues 181–183 (SAH).

The protein belongs to the TRAFAC class translation factor GTPase superfamily. Classic translation factor GTPase family. EIF2G subfamily. In terms of assembly, heterotrimer composed of an alpha, a beta and a gamma chain. Mg(2+) serves as cofactor.

It carries out the reaction GTP + H2O = GDP + phosphate + H(+). In terms of biological role, eIF-2 functions in the early steps of protein synthesis by forming a ternary complex with GTP and initiator tRNA. The chain is Translation initiation factor 2 subunit gamma from Methanococcus maripaludis (strain C6 / ATCC BAA-1332).